The primary structure comprises 313 residues: Protease HtpX homolog (313 aa).

A run of 2 helical transmembrane segments spans residues 7 to 24 (AMLLAFMTALFMAVGYLI) and 29 to 46 (GMMIALVIAAAMNLFSYW). H130 contacts Zn(2+). Residue E131 is part of the active site. Position 134 (H134) interacts with Zn(2+). Helical transmembrane passes span 145–165 (ITATLAGAISMLGNFAFFFGG) and 172–192 (PFGFIGILVAMIVAPLAAMVV). E201 contacts Zn(2+). Residues 282-313 (GNAPPASLREDEPGADGPWGRSASRARKGPWS) form a disordered region.

Belongs to the peptidase M48B family. Requires Zn(2+) as cofactor.

The protein resides in the cell inner membrane. This Chelativorans sp. (strain BNC1) protein is Protease HtpX homolog.